Reading from the N-terminus, the 129-residue chain is Small ribosomal subunit protein bS6 (129 aa).

A disordered region spans residues 100-129; sequence SIMLKQKEERAPRREERSEAKPEAKSEAAE. Over residues 104 to 129 the composition is skewed to basic and acidic residues; sequence KQKEERAPRREERSEAKPEAKSEAAE.

This sequence belongs to the bacterial ribosomal protein bS6 family.

Its function is as follows. Binds together with bS18 to 16S ribosomal RNA. The chain is Small ribosomal subunit protein bS6 from Vibrio parahaemolyticus serotype O3:K6 (strain RIMD 2210633).